The primary structure comprises 404 residues: Argininosuccinate synthase (404 aa).

Residues 10–18 (AYSGGLDTS) and alanine 37 each bind ATP. 2 residues coordinate L-citrulline: tyrosine 90 and serine 95. Position 120 (glycine 120) interacts with ATP. Residues threonine 122, asparagine 126, and aspartate 127 each coordinate L-aspartate. Asparagine 126 lines the L-citrulline pocket. L-citrulline contacts are provided by arginine 130, serine 181, serine 190, glutamate 266, and tyrosine 278. The segment at 173–200 (DKRGESPFSTDANLLHTSSEGKVLEDPW) is disordered. Over residues 179-192 (PFSTDANLLHTSSE) the composition is skewed to polar residues.

This sequence belongs to the argininosuccinate synthase family. Type 1 subfamily. In terms of assembly, homotetramer.

Its subcellular location is the cytoplasm. It carries out the reaction L-citrulline + L-aspartate + ATP = 2-(N(omega)-L-arginino)succinate + AMP + diphosphate + H(+). Its pathway is amino-acid biosynthesis; L-arginine biosynthesis; L-arginine from L-ornithine and carbamoyl phosphate: step 2/3. This chain is Argininosuccinate synthase, found in Novosphingobium aromaticivorans (strain ATCC 700278 / DSM 12444 / CCUG 56034 / CIP 105152 / NBRC 16084 / F199).